A 282-amino-acid chain; its full sequence is Blarina toxin (282 aa).

The N-terminal stretch at 1–17 is a signal peptide; that stretch reads MCFLLLCLTLTLAGTGA. Positions 18–29 are cleaved as a propeptide — activation peptide; it reads VPTGPSIEIHSR. The region spanning 30-279 is the Peptidase S1 domain; sequence IIGGWECDKH…YISWIQETIK (250 aa). 5 disulfides stabilise this stretch: C36–C194, C57–C73, C170–C240, C205–C219, and C230–C255. H72 serves as the catalytic Charge relay system. The O-linked (GalNAc...) serine glycan is linked to S100. N-linked (GlcNAc...) asparagine glycans are attached at residues N109 and N122. Residue D138 is the Charge relay system of the active site. The active-site Charge relay system is the S234.

The protein belongs to the peptidase S1 family. Kallikrein subfamily. Submaxillary and sublingual salivary glands.

The protein resides in the secreted. With respect to regulation, strongly inhibited by aprotinin, moderately inhibited by secretory leukoprotease inhibitor, the Kunitz-type soybean trypsin inhibitor, and leupeptin, and not inhibited by urinary trypsin inhibitor or alpha-1 protease inhibitor. Functionally, has kallikrein-like activity, converts kininogens to kinins, and has dilatory effects on the blood vessel walls. Shows highest activity toward Pro-Phe-Arg-MCA and Boc-Val-Leu-Lys-MCA in vitro. Has preference for Arg and Lys in position P1 and hydrophobic residues in position P2. The sequence is that of Blarina toxin (BTX) from Blarina brevicauda (Northern short-tailed shrew).